A 179-amino-acid polypeptide reads, in one-letter code: Putative FBD-associated F-box protein At3g12840 (179 aa).

The F-box domain occupies 14 to 60 (AARINDLPDDLLATVLSFVPTKDAVATSILSKRWRPIWKRAVNLESD). In terms of domain architecture, FBD spans 101–152 (KWKQPDFVPLSLYRSLEAFEWIGFKGREKTEKKAAFHILRNACNLKTMAITT).

In Arabidopsis thaliana (Mouse-ear cress), this protein is Putative FBD-associated F-box protein At3g12840.